The sequence spans 686 residues: MAM domain-containing protein 2 (686 aa).

The signal sequence occupies residues 1-18 (MLLEGVLLVVQALQLASA). MAM domains lie at 24-169 (GSCA…YCIE), 168-329 (IECD…HCQN), 340-498 (TSCD…NCRS), and 507-666 (GECT…PCAG). Residues Asn134 and Asn329 are each glycosylated (N-linked (GlcNAc...) asparagine). The N-linked (GlcNAc...) asparagine glycan is linked to Asn524. Residues 665–686 (AGMEDTTEQSSGYSEDLNEIEY) are disordered.

Post-translationally, O-glycosylated; contains chondroitin sulfate.

It is found in the secreted. Its subcellular location is the extracellular space. The protein resides in the extracellular matrix. This is MAM domain-containing protein 2 (Mamdc2) from Mus musculus (Mouse).